Consider the following 1090-residue polypeptide: Leucine-rich repeat receptor-like serine/threonine-protein kinase RGI4 (1090 aa).

The N-terminal stretch at 1-20 is a signal peptide; that stretch reads MPRNPRFCFFLFLLFHSSLF. Residues 21–702 are Extracellular-facing; sequence FSIPCFSIDE…IQTRHRSAVK (682 aa). The LRR 1 repeat unit spans residues 36–59; that stretch reads LSWKSQLNISGDALSSWKASESNP. An N-linked (GlcNAc...) asparagine glycan is attached at Asn43. Cysteines 60 and 67 form a disulfide. LRR repeat units lie at residues 95–119, 120–143, 145–166, and 168–191; these read IKSL…LGDL, SELE…IFKL, KLKI…ELGN, and VNLI…IGEL. The N-linked (GlcNAc...) asparagine glycan is linked to Asn107. 4 short sequence motifs (small peptide recognition) span residues 176 to 177, 198 to 201, 221 to 226, and Tyr249; these read FD, RAGG, and TLGLAE. LRR repeat units lie at residues 216–240, 242–264, 265–288, 289–312, 314–335, 336–360, and 362–386; these read CESL…IGNL, KVQT…IGNC, TELQ…MGRL, KKLQ…LGTC, ELFL…SFGN, LPNL…LANC, and KLTH…KLTS. N-linked (GlcNAc...) asparagine glycosylation is present at Asn263. Positions 269–273 match the CLE45 peptide binding motif; that stretch reads NLYLY. The short motif at 271 to 273 is the Small peptide recognition element; sequence YLY. 2 short sequence motifs (small peptide recognition) span residues 319–322 and 341–343; these read DLSE and ELQ. N-linked (GlcNAc...) asparagine glycosylation occurs at Asn359. 2 consecutive short sequence motifs (small peptide recognition) follow at residues 389 to 393 and 415 to 418; these read MFFAW and DLSY. 11 LRR repeats span residues 408 to 432, 434 to 456, 457 to 480, 481 to 504, 506 to 526, 527 to 550, 551 to 574, 576 to 598, 600 to 622, 623 to 646, and 647 to 670; these read CQEL…IFEI, NLTK…IGNC, TNLY…IGNL, KNLN…ISGC, SLEF…GTLP, KSLQ…IGSL, TELT…ISSC, SLQL…LGRI, SLAI…RFSS, LTNL…LADL, and QNLV…LFFR. Residues Asn420 and Asn434 are each glycosylated (N-linked (GlcNAc...) asparagine). Residues 437–441 carry the Small peptide recognition motif; sequence KLLLL. Residue Asn455 is glycosylated (N-linked (GlcNAc...) asparagine). The short motif at 461-463 is the Small peptide recognition element; it reads RLR. An N-linked (GlcNAc...) asparagine glycan is attached at Asn606. Asn653 carries an N-linked (GlcNAc...) asparagine glycan. The helical transmembrane segment at 703–723 threads the bilayer; that stretch reads VTMSILVAASVVLVLMAVYTL. The Cytoplasmic portion of the chain corresponds to 724–1090; it reads VKAQRITGKQ…CSFAYSDESV (367 aa). The Protein kinase domain maps to 758–1040; it reads LTSANVIGTG…KDIVAMLKEI (283 aa). ATP contacts are provided by residues 764–772 and Lys786; that span reads IGTGSSGVV. 2 positions are modified to phosphotyrosine: Tyr829 and Tyr869. Residue Asp882 is the Proton acceptor of the active site. Tyr932 carries the post-translational modification Phosphotyrosine. Residues 1037–1060 form an LRR 24 repeat; it reads LKEIRQFDMDRSESDMIKGGKCEK. The disordered stretch occupies residues 1054 to 1079; sequence KGGKCEKWQPQPLPPEKIVSTPRGSS.

It belongs to the protein kinase superfamily. Ser/Thr protein kinase family. Self-interacts. Interacts with RGF1; this interaction triggers its phosphorylation and ubiquitination and the formation of heterodimers with SERK1. In terms of processing, autophosphorylated. Post-translationally, phosphorylated and ubiquitinated upon interaction with RGF1, thus leading to activation a subsequent degradation. As to expression, expressed in floers, pollen grains and stipules. Present in roots.

It localises to the cell membrane. It carries out the reaction L-seryl-[protein] + ATP = O-phospho-L-seryl-[protein] + ADP + H(+). It catalyses the reaction L-threonyl-[protein] + ATP = O-phospho-L-threonyl-[protein] + ADP + H(+). In terms of biological role, receptor with a serine/threonine-protein kinase activity. Together with SKM1, LRR-rich receptor-like kinase (LRR-RLK) required for male fertility by the perception of CLE43 and CLE45 peptides and the transduction of their promoting action in pollen tubes, especially under relatively high temperature (at 30 degrees Celsius), thus conferring tolerance against high temperature probably through the maintenance of mitochondrial activity. Seems to not be involved in the perception of CLE45 peptide in roots. Together with RGI1, RGI2, RGI3, RGI4 and RGI5, acts as receptor of RGF1, a peptide hormone that maintains the postembryonic root stem cell niche by regulating the expression levels and patterns of the transcription factor PLETHORA (PLT). Links RGF1 signal with its downstream components. This chain is Leucine-rich repeat receptor-like serine/threonine-protein kinase RGI4, found in Arabidopsis thaliana (Mouse-ear cress).